The sequence spans 118 residues: Autophagy-related protein 8 (118 aa).

Residue glycine 116 is the site of Phosphatidylethanolamine amidated glycine attachment. Residues 117–118 (SI) constitute a propeptide, removed in mature form.

It belongs to the ATG8 family. Conjugation to phosphatidylethanolamine (PE) leads to homodimerization. Interacts with ATG1, ATG3, ATG4, ATG7 and ATG12. In terms of processing, the C-terminal Ser-117 and Ile-118 residues of ATG8 are removed by ATG4 to expose Gly-116 at the C-terminus. This Gly-116 forms then a thioester bond with ATG7 (E1-like activating enzyme) before being transferred to ATG3 (the specific E2 conjugating enzyme), in order to be finally amidated with phosphatidylethanolamine. This lipid modification anchors ATG8 to membranes and can be reversed by ATG4, releasing soluble ATG8.

The protein localises to the cytoplasmic vesicle. Its subcellular location is the cvt vesicle membrane. It is found in the autophagosome membrane. It localises to the vacuole membrane. Ubiquitin-like modifier involved in cytoplasm to vacuole transport (Cvt) vesicles and autophagosome formation. With ATG4, mediates the delivery of the vesicles and autophagosomes to the vacuole via the microtubule cytoskeleton. Required for selective autophagic degradation of the nucleus (nucleophagy) as well as for mitophagy which contributes to regulate mitochondrial quantity and quality by eliminating the mitochondria to a basal level to fulfill cellular energy requirements and preventing excess ROS production. Also participates in membrane fusion events that take place in the early secretory pathway. Also involved in endoplasmic reticulum-specific autophagic process and is essential for the survival of cells subjected to severe ER stress. The ATG8-PE conjugate mediates tethering between adjacent membranes and stimulates membrane hemifusion, leading to expansion of the autophagosomal membrane during autophagy. Moreover not only conjugation, but also subsequent ATG8-PE deconjugation is an important step required to facilitate multiple events during macroautophagy, and especially for efficient autophagosome biogenesis, the assembly of ATG9-containing tubulovesicular clusters into phagophores/autophagosomes, and for the disassembly of PAS-associated ATG components. Contributes to conidiation by regulating the conidial levels of the conidiation-related protein CP15 and mediates fungal oxidation resistance by controlling total superoxide dismutase (SOD) activity. The protein is Autophagy-related protein 8 of Beauveria bassiana (strain ARSEF 2860) (White muscardine disease fungus).